Here is a 432-residue protein sequence, read N- to C-terminus: Enolase (432 aa).

Gln167 provides a ligand contact to (2R)-2-phosphoglycerate. Glu209 acts as the Proton donor in catalysis. The Mg(2+) site is built by Asp246, Glu291, and Asp318. Residues Lys343, Arg372, Ser373, and Lys394 each coordinate (2R)-2-phosphoglycerate. The active-site Proton acceptor is Lys343.

Belongs to the enolase family. Component of the RNA degradosome, a multiprotein complex involved in RNA processing and mRNA degradation. It depends on Mg(2+) as a cofactor.

It localises to the cytoplasm. Its subcellular location is the secreted. The protein resides in the cell surface. The catalysed reaction is (2R)-2-phosphoglycerate = phosphoenolpyruvate + H2O. The protein operates within carbohydrate degradation; glycolysis; pyruvate from D-glyceraldehyde 3-phosphate: step 4/5. In terms of biological role, catalyzes the reversible conversion of 2-phosphoglycerate (2-PG) into phosphoenolpyruvate (PEP). It is essential for the degradation of carbohydrates via glycolysis. This chain is Enolase, found in Pseudoalteromonas translucida (strain TAC 125).